The primary structure comprises 494 residues: Glutamate--tRNA ligase (494 aa).

The 'HIGH' region signature appears at 10 to 20; it reads PSPTGDPHVGT. C107, C109, C134, and H136 together coordinate Zn(2+). Residues 251-255 carry the 'KMSKS' region motif; it reads KLSKR. K254 contributes to the ATP binding site.

It belongs to the class-I aminoacyl-tRNA synthetase family. Glutamate--tRNA ligase type 1 subfamily. Monomer. Zn(2+) serves as cofactor.

The protein localises to the cytoplasm. It carries out the reaction tRNA(Glu) + L-glutamate + ATP = L-glutamyl-tRNA(Glu) + AMP + diphosphate. Functionally, catalyzes the attachment of glutamate to tRNA(Glu) in a two-step reaction: glutamate is first activated by ATP to form Glu-AMP and then transferred to the acceptor end of tRNA(Glu). This Pseudomonas aeruginosa (strain UCBPP-PA14) protein is Glutamate--tRNA ligase.